The chain runs to 97 residues: Insertion element IS2 uncharacterized 11.1 kDa protein (97 aa).

The polypeptide is Insertion element IS2 uncharacterized 11.1 kDa protein (Escherichia coli).